A 262-amino-acid polypeptide reads, in one-letter code: Sepiapterin reductase (262 aa).

Met-1 is modified (N-acetylmethionine). 15-21 serves as a coordination point for NADP(+); the sequence is GASRGFG. Ser-33 carries the post-translational modification Phosphoserine. Position 43 to 44 (43 to 44) interacts with NADP(+); sequence RS. Ser-46 bears the Phosphoserine; by CaMK2; in vitro mark. 70 to 71 is a binding site for NADP(+); sequence DL. Substrate-binding positions include 158–159 and Tyr-171; that span reads SL. NADP(+) is bound at residue Lys-175. Residue Ser-196 is modified to Phosphoserine; by CaMK2; in vitro. Gly-200 contributes to the substrate binding site. 202–207 lines the NADP(+) pocket; that stretch reads LDTNMQ. At Ser-214 the chain carries Phosphoserine; by CaMK2; in vitro. A substrate-binding site is contributed by Asp-258.

Belongs to the sepiapterin reductase family. Homodimer. In terms of processing, in vitro phosphorylation of Ser-46, Ser-196 and Ser-214 by CaMK2 does not change kinetic parameters.

The protein resides in the cytoplasm. It catalyses the reaction L-erythro-7,8-dihydrobiopterin + NADP(+) = L-sepiapterin + NADPH + H(+). It carries out the reaction (6R)-L-erythro-5,6,7,8-tetrahydrobiopterin + 2 NADP(+) = 6-pyruvoyl-5,6,7,8-tetrahydropterin + 2 NADPH + 2 H(+). Its function is as follows. Catalyzes the final one or two reductions in tetra-hydrobiopterin biosynthesis to form 5,6,7,8-tetrahydrobiopterin. In Rattus norvegicus (Rat), this protein is Sepiapterin reductase (Spr).